Here is a 498-residue protein sequence, read N- to C-terminus: MGILSYLCYSLFYLSIFFIIRLLFQSRKFKNLPPGPTSLPIIGNLHHLKRPLNRTFKALTEKYGNVISLWFGSRLVVVVSSLSEFQECFTKNDVVLANRPRFLSGKYIFYNYTTLGSTSYGEHWRNLRRITSLDVLSNHRINNFAPIRRDETQRLIKKLAEDSSTKFAEVELTFRFFDMTFNNIMRMISGKRYYGDDCDISEVQEASQFRDMVSELLQLSGANNKTDFMPLLKFLDFENLEKRVKRIGEKNDVFLSGLLQEQRSKKERTNTMIDHLLNMQESQPEYYTDTIIKGLCLAMLLAGTDSSAVTLEWTMSNILNYPEVLKKVRDEVDTHVGQDRLVDESDLPKLTYLRNVIYETLRLYTPAPLLLPHSTADECIMGGYKVPRDTIVLINAWAIHRDPETWSEATTFKPERFDKKGELEKMIAFGMGRRACPGEGLALRAISMTLALLVQCFDWKRINDEKIDMSERDGFTMTKLLPLKAMCKTRPVVNKVFK.

Residues 3–23 (ILSYLCYSLFYLSIFFIIRLL) form a helical membrane-spanning segment. Position 436 (cysteine 436) interacts with heme.

It belongs to the cytochrome P450 family. Heme serves as cofactor. As to expression, expressed constitutively in roots, but present at very low levels in uninfected stems and leaves.

The protein resides in the endoplasmic reticulum membrane. The catalysed reaction is formononetin + reduced [NADPH--hemoprotein reductase] + O2 = 2'-hydroxyformononetin + oxidized [NADPH--hemoprotein reductase] + H2O + H(+). In terms of biological role, involved in the biosynthesis of the pterocarpin phytoalexins. Acts on isoflavones with a 4'-methoxy group on the B-ring, such as formononetin and biochanin A, and on pseudobaptigenin. Has a low activity with daidzein and genistein and no activity with the 7-O-methylated isoflavonoids isoformononetin and prunetin. The protein is Isoflavone 2'-hydroxylase of Medicago truncatula (Barrel medic).